Consider the following 274-residue polypeptide: Coiled-coil domain-containing protein 28A (274 aa).

Residues 121–166 are disordered; that stretch reads VSKSTGFSNPASQSTSQRPKLKRVMKEKTKPQGGEGKGAQSTPIQH. Over residues 122-138 the composition is skewed to polar residues; it reads SKSTGFSNPASQSTSQR. Residues 234–263 are a coiled coil; sequence KRKTASDSNLDRLLSDLEELNSSIQKLHLA.

The polypeptide is Coiled-coil domain-containing protein 28A (CCDC28A) (Homo sapiens (Human)).